We begin with the raw amino-acid sequence, 101 residues long: Urease subunit beta (101 aa).

This sequence belongs to the urease beta subunit family. As to quaternary structure, heterotrimer of UreA (gamma), UreB (beta) and UreC (alpha) subunits. Three heterotrimers associate to form the active enzyme.

The protein resides in the cytoplasm. It catalyses the reaction urea + 2 H2O + H(+) = hydrogencarbonate + 2 NH4(+). The protein operates within nitrogen metabolism; urea degradation; CO(2) and NH(3) from urea (urease route): step 1/1. The polypeptide is Urease subunit beta (Rhizobium johnstonii (strain DSM 114642 / LMG 32736 / 3841) (Rhizobium leguminosarum bv. viciae)).